Consider the following 606-residue polypeptide: Probable glutamine--fructose-6-phosphate aminotransferase [isomerizing] (606 aa).

C2 serves as the catalytic For GATase activity. The 223-residue stretch at 2-224 (CGISACLNHT…DNDYGYITNN (223 aa)) folds into the Glutamine amidotransferase type-2 domain. SIS domains lie at 282-427 (FFPE…SLDN) and 458-596 (LLEF…PDYP).

The catalysed reaction is D-fructose 6-phosphate + L-glutamine = D-glucosamine 6-phosphate + L-glutamate. The protein operates within nucleotide-sugar biosynthesis; UDP-N-acetyl-alpha-D-glucosamine biosynthesis; alpha-D-glucosamine 6-phosphate from D-fructose 6-phosphate: step 1/1. Functionally, controls the flux of glucose into the hexosamine pathway. Most likely involved in regulating the availability of precursors for glycosylation of proteins (Potential). In Acanthamoeba polyphaga (Amoeba), this protein is Probable glutamine--fructose-6-phosphate aminotransferase [isomerizing].